We begin with the raw amino-acid sequence, 329 residues long: Putative 1-aminocyclopropane-1-carboxylate deaminase (329 aa).

Residue K54 is modified to N6-(pyridoxal phosphate)lysine.

Belongs to the ACC deaminase/D-cysteine desulfhydrase family. Pyridoxal 5'-phosphate serves as cofactor.

The catalysed reaction is 1-aminocyclopropane-1-carboxylate + H2O = 2-oxobutanoate + NH4(+). This Pyrococcus furiosus (strain ATCC 43587 / DSM 3638 / JCM 8422 / Vc1) protein is Putative 1-aminocyclopropane-1-carboxylate deaminase.